Consider the following 144-residue polypeptide: Large ribosomal subunit protein uL16 (144 aa).

Basic residues predominate over residues 1 to 16 (MLVPKRVKHRKVQRGK). The disordered stretch occupies residues 1-20 (MLVPKRVKHRKVQRGKMRGE).

The protein belongs to the universal ribosomal protein uL16 family. As to quaternary structure, part of the 50S ribosomal subunit.

Its function is as follows. Binds 23S rRNA and is also seen to make contacts with the A and possibly P site tRNAs. This is Large ribosomal subunit protein uL16 from Limosilactobacillus fermentum (strain NBRC 3956 / LMG 18251) (Lactobacillus fermentum).